A 323-amino-acid chain; its full sequence is RNA polymerase sigma factor SigB (323 aa).

Positions 1 to 228 (MADAPTRATT…DMPVGSEEEA (228 aa)) are sufficient to interact with RbpA. The interval 25–59 (DLVRVYLNGIGKTALLNAAGEVELAKRIEAGLYAE) is sigma-70 factor domain-1. The sigma-70 factor domain-2 stretch occupies residues 90 to 160 (LLEANLRLVV…TRGMADQSRT (71 aa)). A Polymerase core binding motif is present at residues 114–117 (DLIQ). Residues 169–245 (EQVNKLARIK…DAEAMSAENA (77 aa)) form a sigma-70 factor domain-3 region. The tract at residues 258 to 311 (VLATLDEREHQVIRLRFGLDDGQPRTLDQIGKLFGLSRERVRQIERDVMSKLRH) is sigma-70 factor domain-4. Positions 284–303 (LDQIGKLFGLSRERVRQIER) form a DNA-binding region, H-T-H motif.

The protein belongs to the sigma-70 factor family. Monomer. Interacts transiently with the RNA polymerase catalytic core formed by RpoA, RpoB, RpoC and RpoZ (2 alpha, 1 beta, 1 beta' and 1 omega subunit) to form the RNA polymerase holoenzyme that can initiate transcription.

In terms of biological role, sigma factors are initiation factors that promote the attachment of RNA polymerase to specific initiation sites and are then released. A non-essential principal sigma factor that responds to cell envelope stress and hypoxia. The protein is RNA polymerase sigma factor SigB (sigB) of Mycobacterium tuberculosis (strain CDC 1551 / Oshkosh).